We begin with the raw amino-acid sequence, 360 residues long: Cysteine proteinase 2 (360 aa).

The N-terminal stretch at 1–19 is a signal peptide; that stretch reads MVPRRLFVLAVVVLADTAA. The propeptide at 20 to 142 is activation peptide; sequence VVNSGFADSN…NHRMRAAAVA (123 aa). Asn-125 is a glycosylation site (N-linked (GlcNAc...) asparagine). 2 disulfides stabilise this stretch: Cys-164–Cys-207 and Cys-198–Cys-240. Cys-167 is an active-site residue. The N-linked (GlcNAc...) asparagine glycan is linked to Asn-256. The cysteines at positions 298 and 348 are disulfide-linked. Catalysis depends on residues His-307 and Asn-327.

The protein belongs to the peptidase C1 family. In terms of tissue distribution, expressed at the onset of germination.

Its subcellular location is the vacuole. Functionally, involved in the degradation of the storage protein zein. May play a role in proteolysis during emergencies. In Zea mays (Maize), this protein is Cysteine proteinase 2 (CCP2).